Consider the following 131-residue polypeptide: Small ribosomal subunit protein uS8 (131 aa).

It belongs to the universal ribosomal protein uS8 family. In terms of assembly, part of the 30S ribosomal subunit. Contacts proteins S5 and S12.

In terms of biological role, one of the primary rRNA binding proteins, it binds directly to 16S rRNA central domain where it helps coordinate assembly of the platform of the 30S subunit. The protein is Small ribosomal subunit protein uS8 of Leptothrix cholodnii (strain ATCC 51168 / LMG 8142 / SP-6) (Leptothrix discophora (strain SP-6)).